The chain runs to 399 residues: Elongation factor Tu (399 aa).

The tr-type G domain maps to 10 to 204 (KPHVNIGTIG…AVDASIPEPE (195 aa)). A G1 region spans residues 19–26 (GHVDHGKT). 19–26 (GHVDHGKT) is a GTP binding site. Threonine 26 contacts Mg(2+). The tract at residues 60 to 64 (GITIN) is G2. Residues 81 to 84 (DCPG) form a G3 region. Residues 81–85 (DCPGH) and 136–139 (NKCD) contribute to the GTP site. The G4 stretch occupies residues 136 to 139 (NKCD). A G5 region spans residues 174–176 (SGL).

The protein belongs to the TRAFAC class translation factor GTPase superfamily. Classic translation factor GTPase family. EF-Tu/EF-1A subfamily. As to quaternary structure, monomer.

It localises to the cytoplasm. The enzyme catalyses GTP + H2O = GDP + phosphate + H(+). In terms of biological role, GTP hydrolase that promotes the GTP-dependent binding of aminoacyl-tRNA to the A-site of ribosomes during protein biosynthesis. This is Elongation factor Tu from Prochlorococcus marinus subsp. pastoris (strain CCMP1986 / NIES-2087 / MED4).